Here is a 719-residue protein sequence, read N- to C-terminus: Serine/threonine-protein kinase CBK1 (719 aa).

2 disordered regions span residues 1–75 (MFGQ…GAGF) and 100–219 (MQQQ…QTSG). The span at 24–38 (QFSSAYMEQQGSHQS) shows a compositional bias: polar residues. Low complexity predominate over residues 40 to 63 (QEHLAYEQLQLQQQQQQQQQHAAA). 3 stretches are compositionally biased toward polar residues: residues 112 to 130 (ATSI…NDTT), 139 to 157 (GHYS…SSAY), and 181 to 219 (GDQT…QTSG). One can recognise a Protein kinase domain in the interval 310–631 (FHTVKVIGKG…ANEIKNHPFF (322 aa)). Residues 316–324 (IGKGAFGEV) and lysine 339 contribute to the ATP site. Aspartate 433 (proton acceptor) is an active-site residue. The AGC-kinase C-terminal domain occupies 632-717 (RGVDWETIRQ…SRFDYLTRKN (86 aa)).

It belongs to the protein kinase superfamily. STE Ser/Thr protein kinase family. COT1 subfamily.

The catalysed reaction is L-seryl-[protein] + ATP = O-phospho-L-seryl-[protein] + ADP + H(+). The enzyme catalyses L-threonyl-[protein] + ATP = O-phospho-L-threonyl-[protein] + ADP + H(+). Functionally, protein kinase that seems to play a role in the regulation of cell morphogenesis and proliferation. In Eremothecium gossypii (strain ATCC 10895 / CBS 109.51 / FGSC 9923 / NRRL Y-1056) (Yeast), this protein is Serine/threonine-protein kinase CBK1 (CBK1).